The sequence spans 1020 residues: 5'-3' exoribonuclease 3 (1020 aa).

Positions 113-144 (QQRSRRFRSAKDASDAAAEEERLREEFEREGR) are disordered. Positions 121–144 (SAKDASDAAAEEERLREEFEREGR) are enriched in basic and acidic residues. The segment at 262–279 (ERCFLCGQMGHFASNCEG) adopts a CCHC-type zinc-finger fold. Disordered stretches follow at residues 411–440 (QHQR…TVQP) and 452–483 (RLAS…PGSS). Residues 414-433 (RQAERVKRDKAGKATKRMDD) show a composition bias toward basic and acidic residues. The stretch at 487–523 (AIVDVENSLESDERENKEELKTKLKELIREKSDAFNS) forms a coiled coil. A compositionally biased stretch (low complexity) spans 831-844 (NNHGMHNNHGMHNN). Disordered regions lie at residues 831–859 (NNHG…GRHL), 875–897 (TDRY…PQYV), and 911–1020 (PGAQ…RHRY). Low complexity-rich tracts occupy residues 911 to 923 (PGAQ…APYQ) and 960 to 972 (GNHQ…QQWH). Basic residues predominate over residues 1000-1020 (RGRGRGSHHHHDQGGNPRHRY).

The protein belongs to the 5'-3' exonuclease family. XRN2/RAT1 subfamily. As to expression, expressed in roots, leaves, stems and flowers.

The protein resides in the nucleus. Its function is as follows. Possesses 5'-&gt;3' exoribonuclease activity. Acts as an endogenous post-transcriptional gene silencing (PTGS) suppressor. Degrades miRNA-derived loops, excised during miRNA maturation in the nucleus. Required for proper development. Involved in pre-rRNA processing. Involved with XRN2 in the 5'-end exonucleolytic processing of 5.8S and 25S rRNAs. Contributes with XRN2 to polyadenylation-dependent nuclear RNA surveillance. Involved in the degradation of aberrant polyadenylated pre-rRNA through 5'-end processing. This Arabidopsis thaliana (Mouse-ear cress) protein is 5'-3' exoribonuclease 3.